The chain runs to 610 residues: UvrABC system protein C (610 aa).

The GIY-YIG domain occupies 16 to 94 (SQPGVYRMYD…IKLYQPRYNV (79 aa)). Residues 204-239 (DQVLTQLIARMEKASQDLAFEEAARIRDQIQAVRRV) enclose the UVR domain.

This sequence belongs to the UvrC family. In terms of assembly, interacts with UvrB in an incision complex.

The protein resides in the cytoplasm. Its function is as follows. The UvrABC repair system catalyzes the recognition and processing of DNA lesions. UvrC both incises the 5' and 3' sides of the lesion. The N-terminal half is responsible for the 3' incision and the C-terminal half is responsible for the 5' incision. This chain is UvrABC system protein C, found in Salmonella agona (strain SL483).